Consider the following 44-residue polypeptide: Antifungal protein R (44 aa).

Belongs to the thaumatin family.

Has antifungal activity. Inhibits the growth of Trichoderma viridae and Candida albicans. This Hordeum vulgare (Barley) protein is Antifungal protein R.